The primary structure comprises 255 residues: Small ribosomal subunit protein eS1 (255 aa).

Over residues Met-1–Lys-18 the composition is skewed to basic residues. Positions Met-1–Asp-28 are disordered. Ala-2 carries the post-translational modification N-acetylalanine; partial. Positions Arg-19 to Asp-28 are enriched in basic and acidic residues.

The protein belongs to the eukaryotic ribosomal protein eS1 family. Component of the small ribosomal subunit. Mature ribosomes consist of a small (40S) and a large (60S) subunit. The 40S subunit contains about 33 different proteins and 1 molecule of RNA (18S). The 60S subunit contains about 49 different proteins and 3 molecules of RNA (25S, 5.8S and 5S).

Its subcellular location is the cytoplasm. The protein is Small ribosomal subunit protein eS1 of Ajellomyces capsulatus (strain NAm1 / WU24) (Darling's disease fungus).